Consider the following 339-residue polypeptide: MNTRFLDACWGKPVDTVPVWLMRQAGRYLPDYMRVRSKCTFLELCKTPELATEVTVQPVDILGVDAAILFSDILTPIEPMGMELDFTPGPVFAKPIRTMADVEALKIPKMETDVPYVLDAVKLLRKELAAKVPLIGFGGAPFTLACYMVEGKGSKDFAALKKMMYADPEVYAALMEKITTMDMEYLNAQIKAGAQAIQIFDTWGGMLSPADYERYVLPYTQRLINGLDRTNIPVIHFVKGAGTMLEIVKQAGGDVMGLDWHVNLGKARDILGDMAVQGNLDPTVLFAPNEIIEREVKRVLDENAGRPGLIFNLGHGILPTVPPEKAIFMVDCVHRLSRK.

Substrate contacts are provided by residues 23–27, Asp72, Tyr147, Thr202, and His315; that span reads RQAGR.

The protein belongs to the uroporphyrinogen decarboxylase family. Homodimer.

It is found in the cytoplasm. The enzyme catalyses uroporphyrinogen III + 4 H(+) = coproporphyrinogen III + 4 CO2. It functions in the pathway porphyrin-containing compound metabolism; protoporphyrin-IX biosynthesis; coproporphyrinogen-III from 5-aminolevulinate: step 4/4. Its function is as follows. Catalyzes the decarboxylation of four acetate groups of uroporphyrinogen-III to yield coproporphyrinogen-III. The chain is Uroporphyrinogen decarboxylase from Geobacter sp. (strain M21).